A 350-amino-acid polypeptide reads, in one-letter code: Quercetin 2,3-dioxygenase (350 aa).

The cupin 1 stretch occupies residues 1 to 145; the sequence is DTSSLIVEDA…FYYLGTNATD (145 aa). Cu cation contacts are provided by H66, H68, and E73. H66 provides a ligand contact to substrate. E73 provides a ligand contact to substrate. N-linked (GlcNAc...) asparagine glycosylation is found at N90 and N109. H112 provides a ligand contact to Cu cation. N-linked (GlcNAc...) asparagine glycosylation occurs at N142. The linker stretch occupies residues 146–205; the sequence is TTHTPYIPSSSDSSSTTGPDSSTISTLQSFDVYAELSFTPRTDTVNGTAPANTVWHTGAN. The interval 148–167 is disordered; the sequence is HTPYIPSSSDSSSTTGPDSS. Residues 152-167 show a composition bias toward low complexity; that stretch reads IPSSSDSSSTTGPDSS. N-linked (GlcNAc...) asparagine glycosylation is found at N191 and N248. A cupin 2 region spans residues 206-350; sequence ALASTAGDPY…WSSVSFPADW (145 aa).

Homodimer. The cofactor is Cu cation. In terms of processing, the N-linked glycan at Asn-191 consists of Man(5)-GlcNAc(2).

The catalysed reaction is quercetin + O2 = 2-(3,4-dihydroxybenzoyloxy)-4,6-dihydroxybenzoate + CO. Its pathway is flavonoid metabolism; quercetin degradation. Its activity is regulated as follows. Inhibited by diethyldithiocarbamate and kojic acid. Performs the first step in the degradation of the flavonoid quercetin by a dioxygenase reaction. The enzyme catalyzes the cleavage of the O-heteroaromatic ring of the flavonol quercetin yielding the depside 2-protocatechuoyl-phloroglucinol carboxylic acid and carbon monoxide. This involves the remarkable dioxygenolytic cleavage of two carbon-carbon bonds. This chain is Quercetin 2,3-dioxygenase, found in Aspergillus japonicus.